The primary structure comprises 185 residues: Ribosome-recycling factor (185 aa).

This sequence belongs to the RRF family.

The protein localises to the cytoplasm. In terms of biological role, responsible for the release of ribosomes from messenger RNA at the termination of protein biosynthesis. May increase the efficiency of translation by recycling ribosomes from one round of translation to another. The chain is Ribosome-recycling factor from Salmonella arizonae (strain ATCC BAA-731 / CDC346-86 / RSK2980).